Consider the following 379-residue polypeptide: Homoserine O-succinyltransferase (379 aa).

The region spanning asparagine 51–leucine 360 is the AB hydrolase-1 domain. The Nucleophile role is filled by serine 157. Arginine 227 provides a ligand contact to substrate. Active-site residues include aspartate 323 and histidine 356. Residue aspartate 357 coordinates substrate.

This sequence belongs to the AB hydrolase superfamily. MetX family. Homodimer.

It localises to the cytoplasm. It carries out the reaction L-homoserine + succinyl-CoA = O-succinyl-L-homoserine + CoA. It participates in amino-acid biosynthesis; L-methionine biosynthesis via de novo pathway; O-succinyl-L-homoserine from L-homoserine: step 1/1. In terms of biological role, transfers a succinyl group from succinyl-CoA to L-homoserine, forming succinyl-L-homoserine. The polypeptide is Homoserine O-succinyltransferase (Pseudomonas fluorescens (strain Pf0-1)).